A 409-amino-acid chain; its full sequence is Phosphatidylserine decarboxylase proenzyme, mitochondrial (409 aa).

The N-terminal 52 residues, 1–52 (MATSVGHRCLGLLHGVAPWRSSLHPCEITALSQSLQPLRKLPFRAFRTDARK), are a transit peptide targeting the mitochondrion. Positions 36–103 (QPLRKLPFRA…LGLEIPPKLA (68 aa)) are necessary for localization to both lipid droplets and mitochondria. Residues 53–63 (IHTAPARTMFL) are Mitochondrial matrix-facing. The chain crosses the membrane as a helical span at residues 64–82 (LRPLPILLVTGGGYAGYRQ). The Mitochondrial intermembrane segment spans residues 83 to 409 (YEKYRERELE…IRFGEALGSL (327 aa)). Catalysis depends on charge relay system; for autoendoproteolytic cleavage activity residues aspartate 191, histidine 267, and serine 378. The active-site Schiff-base intermediate with substrate; via pyruvic acid; for decarboxylase activity is serine 378. Serine 378 is subject to Pyruvic acid (Ser); by autocatalysis.

Belongs to the phosphatidylserine decarboxylase family. PSD-B subfamily. Eukaryotic type I sub-subfamily. Heterodimer of a large membrane-associated beta subunit and a small pyruvoyl-containing alpha subunit. It depends on pyruvate as a cofactor. Is synthesized initially as an inactive proenzyme. Formation of the active enzyme involves a self-maturation process in which the active site pyruvoyl group is generated from an internal serine residue via an autocatalytic post-translational modification. Two non-identical subunits are generated from the proenzyme in this reaction, and the pyruvate is formed at the N-terminus of the alpha chain, which is derived from the carboxyl end of the proenzyme. The autoendoproteolytic cleavage occurs by a canonical serine protease mechanism, in which the side chain hydroxyl group of the serine supplies its oxygen atom to form the C-terminus of the beta chain, while the remainder of the serine residue undergoes an oxidative deamination to produce ammonia and the pyruvoyl prosthetic group on the alpha chain. During this reaction, the Ser that is part of the protease active site of the proenzyme becomes the pyruvoyl prosthetic group, which constitutes an essential element of the active site of the mature decarboxylase.

It localises to the mitochondrion inner membrane. The protein localises to the cytoplasm. Its subcellular location is the lipid droplet. The enzyme catalyses a 1,2-diacyl-sn-glycero-3-phospho-L-serine + H(+) = a 1,2-diacyl-sn-glycero-3-phosphoethanolamine + CO2. The protein operates within phospholipid metabolism; phosphatidylethanolamine biosynthesis. Functionally, catalyzes the formation of phosphatidylethanolamine (PtdEtn) from phosphatidylserine (PtdSer). Plays a central role in phospholipid metabolism and in the interorganelle trafficking of phosphatidylserine. May be involved in lipid droplet biogenesis at the endoplasmic reticulum membrane. The chain is Phosphatidylserine decarboxylase proenzyme, mitochondrial from Homo sapiens (Human).